The following is a 419-amino-acid chain: Aminoacyltransferase FemB (419 aa).

Belongs to the FemABX family. In terms of assembly, homodimer. Interacts with FemA.

Its subcellular location is the cytoplasm. The enzyme catalyses MurNAc-L-Ala-D-isoglutaminyl-L-Lys-(N(6)-tri-Gly)-D-Ala-D-Ala-diphospho-di-trans,octa-cis-undecaprenyl-GlcNAc + 2 glycyl-tRNA(Gly) = MurNAc-L-Ala-D-isoglutaminyl-L-Lys-(N(6)-penta-Gly)-D-Ala-D-Ala-diphospho-di-trans,octa-cis-undecaprenyl-GlcNAc + 2 tRNA(Gly) + 2 H(+). Catalyzes the formation of the pentaglycine interpeptide bridge, which is characteristic of the S.aureus peptidoglycan. Adds glycines 4 and 5 of the pentaglycine bridge, using glycyl-tRNA(Gly) as donor. The sequence is that of Aminoacyltransferase FemB (femB) from Staphylococcus aureus (strain bovine RF122 / ET3-1).